A 260-amino-acid chain; its full sequence is 14-3-3 protein 4 (260 aa).

Positions 238 to 260 (DNADDVGDDIKEASKPESGEGQQ) are disordered. Residues 245–260 (DDIKEASKPESGEGQQ) show a composition bias toward basic and acidic residues.

It belongs to the 14-3-3 family. In terms of assembly, homodimer.

The polypeptide is 14-3-3 protein 4 (TFT4) (Solanum lycopersicum (Tomato)).